The chain runs to 99 residues: ATP-dependent Clp protease adapter protein ClpS (99 aa).

This sequence belongs to the ClpS family. As to quaternary structure, binds to the N-terminal domain of the chaperone ClpA.

Involved in the modulation of the specificity of the ClpAP-mediated ATP-dependent protein degradation. This chain is ATP-dependent Clp protease adapter protein ClpS, found in Acetivibrio thermocellus (strain ATCC 27405 / DSM 1237 / JCM 9322 / NBRC 103400 / NCIMB 10682 / NRRL B-4536 / VPI 7372) (Clostridium thermocellum).